Consider the following 470-residue polypeptide: A-type ATP synthase subunit B (470 aa).

The protein belongs to the ATPase alpha/beta chains family. In terms of assembly, has multiple subunits with at least A(3), B(3), C, D, E, F, H, I and proteolipid K(x).

It localises to the cell membrane. In terms of biological role, component of the A-type ATP synthase that produces ATP from ADP in the presence of a proton gradient across the membrane. The B chain is a regulatory subunit. This chain is A-type ATP synthase subunit B, found in Haloarcula marismortui (strain ATCC 43049 / DSM 3752 / JCM 8966 / VKM B-1809) (Halobacterium marismortui).